Here is a 223-residue protein sequence, read N- to C-terminus: MEVKDILKTVDHTLLATTATWPEIQTILDDAMAYETASACIPASYVKKAAEYVSGKLAICTVIGFPNGYSTTAAKVFECQDAIQNGADEIDMVINLTDVKNGDFDTVEEEIRQIKAKCQDHILKVIVETCQLTKEELIELCGVVTRSGADFIKTSTGFSTAGATFEDVEVMAKYVGEGVKIKAAGGISSLEDAKTFIALGASRLGTSRIIKIVKNEATKTDSY.

Catalysis depends on D91, which acts as the Proton donor/acceptor. The active-site Schiff-base intermediate with acetaldehyde is K153. The active-site Proton donor/acceptor is the K182.

It belongs to the DeoC/FbaB aldolase family. DeoC type 1 subfamily.

The protein resides in the cytoplasm. The enzyme catalyses 2-deoxy-D-ribose 5-phosphate = D-glyceraldehyde 3-phosphate + acetaldehyde. It participates in carbohydrate degradation; 2-deoxy-D-ribose 1-phosphate degradation; D-glyceraldehyde 3-phosphate and acetaldehyde from 2-deoxy-alpha-D-ribose 1-phosphate: step 2/2. In terms of biological role, catalyzes a reversible aldol reaction between acetaldehyde and D-glyceraldehyde 3-phosphate to generate 2-deoxy-D-ribose 5-phosphate. The chain is Deoxyribose-phosphate aldolase from Streptococcus pyogenes serotype M1.